Reading from the N-terminus, the 141-residue chain is Nucleoside diphosphate kinase (141 aa).

The ATP site is built by Lys11, Phe59, Arg87, Thr93, Arg104, and Asn114. His117 functions as the Pros-phosphohistidine intermediate in the catalytic mechanism.

It belongs to the NDK family. In terms of assembly, homotetramer. The cofactor is Mg(2+).

It localises to the cytoplasm. It catalyses the reaction a 2'-deoxyribonucleoside 5'-diphosphate + ATP = a 2'-deoxyribonucleoside 5'-triphosphate + ADP. The enzyme catalyses a ribonucleoside 5'-diphosphate + ATP = a ribonucleoside 5'-triphosphate + ADP. Its function is as follows. Major role in the synthesis of nucleoside triphosphates other than ATP. The ATP gamma phosphate is transferred to the NDP beta phosphate via a ping-pong mechanism, using a phosphorylated active-site intermediate. This is Nucleoside diphosphate kinase from Haemophilus influenzae (strain 86-028NP).